The primary structure comprises 274 residues: MEEKVSTLTLRKFKKEGRKITALTAYDFPTAKILDNCGIDMILVGDSLGMVVLGYESTIPVTMEDMIHHTKAVSRAVNRAFIVADMPFMSYHISKEQAMTNAARLIAEGGAHAVKLEGGEEIASIVKAIVDAGIPVVGHLGLTPQSVHQLGGYKVQGKEKEQAKKIFNDAKVLEQAGICALVLESIPMELAKNITENISVPTIGIGAGPYCDGQILVTHDMLGITQGHRPKFVKQYADIEKIMIDGINAYIKEVQQVLFPDEEHSFTLEKRENK.

2 residues coordinate Mg(2+): Asp46 and Asp85. 3-methyl-2-oxobutanoate contacts are provided by residues 46–47 (DS), Asp85, and Lys115. Glu117 is a Mg(2+) binding site. The active-site Proton acceptor is the Glu184.

This sequence belongs to the PanB family. Homodecamer; pentamer of dimers. Mg(2+) serves as cofactor.

Its subcellular location is the cytoplasm. The enzyme catalyses 3-methyl-2-oxobutanoate + (6R)-5,10-methylene-5,6,7,8-tetrahydrofolate + H2O = 2-dehydropantoate + (6S)-5,6,7,8-tetrahydrofolate. Its pathway is cofactor biosynthesis; (R)-pantothenate biosynthesis; (R)-pantoate from 3-methyl-2-oxobutanoate: step 1/2. Functionally, catalyzes the reversible reaction in which hydroxymethyl group from 5,10-methylenetetrahydrofolate is transferred onto alpha-ketoisovalerate to form ketopantoate. In Thermoanaerobacter pseudethanolicus (strain ATCC 33223 / 39E) (Clostridium thermohydrosulfuricum), this protein is 3-methyl-2-oxobutanoate hydroxymethyltransferase.